A 421-amino-acid polypeptide reads, in one-letter code: Enolase (421 aa).

Gln-162 lines the (2R)-2-phosphoglycerate pocket. Glu-204 (proton donor) is an active-site residue. Residues Asp-241, Glu-284, and Asp-311 each coordinate Mg(2+). 4 residues coordinate (2R)-2-phosphoglycerate: Lys-336, Arg-365, Ser-366, and Lys-387. Lys-336 acts as the Proton acceptor in catalysis.

The protein belongs to the enolase family. Mg(2+) is required as a cofactor.

The protein resides in the cytoplasm. Its subcellular location is the secreted. It is found in the cell surface. The enzyme catalyses (2R)-2-phosphoglycerate = phosphoenolpyruvate + H2O. Its pathway is carbohydrate degradation; glycolysis; pyruvate from D-glyceraldehyde 3-phosphate: step 4/5. Functionally, catalyzes the reversible conversion of 2-phosphoglycerate (2-PG) into phosphoenolpyruvate (PEP). It is essential for the degradation of carbohydrates via glycolysis. This Nautilia profundicola (strain ATCC BAA-1463 / DSM 18972 / AmH) protein is Enolase.